Reading from the N-terminus, the 388-residue chain is 4-hydroxy-3-methylbut-2-en-1-yl diphosphate synthase (flavodoxin) (388 aa).

The tract at residues 1 to 22 is disordered; the sequence is MTSVNLGMPAAPQPVLSPRRKT. Residues Cys281, Cys284, Cys316, and Glu323 each coordinate [4Fe-4S] cluster.

The protein belongs to the IspG family. It depends on [4Fe-4S] cluster as a cofactor.

The catalysed reaction is (2E)-4-hydroxy-3-methylbut-2-enyl diphosphate + oxidized [flavodoxin] + H2O + 2 H(+) = 2-C-methyl-D-erythritol 2,4-cyclic diphosphate + reduced [flavodoxin]. Its pathway is isoprenoid biosynthesis; isopentenyl diphosphate biosynthesis via DXP pathway; isopentenyl diphosphate from 1-deoxy-D-xylulose 5-phosphate: step 5/6. In terms of biological role, converts 2C-methyl-D-erythritol 2,4-cyclodiphosphate (ME-2,4cPP) into 1-hydroxy-2-methyl-2-(E)-butenyl 4-diphosphate. This chain is 4-hydroxy-3-methylbut-2-en-1-yl diphosphate synthase (flavodoxin), found in Kocuria rhizophila (strain ATCC 9341 / DSM 348 / NBRC 103217 / DC2201).